The primary structure comprises 397 residues: Elongation factor Tu (397 aa).

The tr-type G domain occupies 10-207 (LPHVNVGTIG…TLDAYIPEPV (198 aa)). The segment at 19–26 (GHVDHGKT) is G1. Residue 19-26 (GHVDHGKT) coordinates GTP. T26 contributes to the Mg(2+) binding site. The G2 stretch occupies residues 60–64 (GITIN). Residues 81 to 84 (DCPG) are G3. Residues 81-85 (DCPGH) and 136-139 (NKAD) contribute to the GTP site. Residues 136–139 (NKAD) are G4. Positions 174-176 (SAR) are G5.

Belongs to the TRAFAC class translation factor GTPase superfamily. Classic translation factor GTPase family. EF-Tu/EF-1A subfamily. Monomer.

Its subcellular location is the cytoplasm. The enzyme catalyses GTP + H2O = GDP + phosphate + H(+). In terms of biological role, GTP hydrolase that promotes the GTP-dependent binding of aminoacyl-tRNA to the A-site of ribosomes during protein biosynthesis. The chain is Elongation factor Tu from Pseudomonas entomophila (strain L48).